Consider the following 269-residue polypeptide: Integral membrane protein 2C (269 aa).

Thr39 is modified (phosphothreonine). The helical; Signal-anchor for type II membrane protein transmembrane segment at 57-77 threads the bilayer; the sequence is VGGVCYLSMGMVVLLMGLVFA. One can recognise a BRICHOS domain in the interval 138 to 232; the sequence is FGGGDPADII…LCNGKDTYRL (95 aa). Cysteines 165 and 224 form a disulfide. Asn171 is a glycosylation site (N-linked (GlcNAc...) asparagine).

This sequence belongs to the ITM2 family. As to quaternary structure, interacts with BACE1. Interacts with APP. Interacts with STMN2. Post-translationally, type I membrane-bound, as well as soluble, furin has a pre-eminent role in ITM2C proteolytic processing. PCSK7 and PCSK5 may also be involved although to a lesser extent. The soluble form of PCSK7 is incapable of processing ITM2C. Fails to undergo shedding by ADAM10 and intramembrane cleavage by SPPL2B.

It localises to the lysosome membrane. Its subcellular location is the cell membrane. Functionally, negative regulator of amyloid-beta peptide production. May inhibit the processing of APP by blocking its access to alpha- and beta-secretase. Binding to the beta-secretase-cleaved APP C-terminal fragment is negligible, suggesting that ITM2C is a poor gamma-secretase cleavage inhibitor. May play a role in TNF-induced cell death and neuronal differentiation. The polypeptide is Integral membrane protein 2C (Itm2c) (Mus musculus (Mouse)).